A 281-amino-acid polypeptide reads, in one-letter code: Probable ABC transporter ATP-binding protein AZC_3926 (281 aa).

Residues 1–38 (MNVLSMFGRNATRETSSPAATAGRYADEGDWEGDDHQP) form a disordered region. The 233-residue stretch at 45 to 277 (LAAFGLAKSY…PDVRRLYLGE (233 aa)) folds into the ABC transporter domain. 77 to 84 (GPNGAGKT) is a binding site for ATP.

Belongs to the ABC transporter superfamily.

This is Probable ABC transporter ATP-binding protein AZC_3926 from Azorhizobium caulinodans (strain ATCC 43989 / DSM 5975 / JCM 20966 / LMG 6465 / NBRC 14845 / NCIMB 13405 / ORS 571).